Reading from the N-terminus, the 864-residue chain is Leucine--tRNA ligase (864 aa).

Residues P42–H52 carry the 'HIGH' region motif. Positions K624–S628 match the 'KMSKS' region motif. Residue K627 coordinates ATP.

It belongs to the class-I aminoacyl-tRNA synthetase family.

It is found in the cytoplasm. It catalyses the reaction tRNA(Leu) + L-leucine + ATP = L-leucyl-tRNA(Leu) + AMP + diphosphate. This is Leucine--tRNA ligase from Burkholderia pseudomallei (strain 1710b).